The primary structure comprises 327 residues: Regulatory protein MsrR (327 aa).

A compositionally biased stretch (basic and acidic residues) spans 1–18 (MDKETNDNEYRRQSEHRT). Residues 1–24 (MDKETNDNEYRRQSEHRTSAPKRK) are disordered. The Cytoplasmic portion of the chain corresponds to 1–31 (MDKETNDNEYRRQSEHRTSAPKRKKKKKIRK). The helical; Signal-anchor for type II membrane protein transmembrane segment at 32–52 (LPIILLIVVILLIALVVYIVH) threads the bilayer. Residues 53–327 (SYNSGVEYAK…QAIKDFLDED (275 aa)) lie on the Extracellular side of the membrane.

The protein belongs to the LytR/CpsA/Psr (LCP) family.

It is found in the cell membrane. Its function is as follows. Involved in SarA attenuation. Affects resistance to oxacillin and teicoplanin, as well as the synthesis of virulence factors. The sequence is that of Regulatory protein MsrR (msrR) from Staphylococcus aureus (strain Mu50 / ATCC 700699).